We begin with the raw amino-acid sequence, 274 residues long: Diaminopimelate epimerase (274 aa).

N11, Q44, and N64 together coordinate substrate. C73 functions as the Proton donor in the catalytic mechanism. Substrate-binding positions include 74–75 (GN), N157, N190, and 208–209 (ER). Catalysis depends on C217, which acts as the Proton acceptor. 218–219 (GS) is a substrate binding site.

The protein belongs to the diaminopimelate epimerase family. In terms of assembly, homodimer (Potential). Previously DapF has been proposed to be a monomer, however it seems that it adopts a dimeric structure.

It localises to the cytoplasm. It carries out the reaction (2S,6S)-2,6-diaminopimelate = meso-2,6-diaminopimelate. It participates in amino-acid biosynthesis; L-lysine biosynthesis via DAP pathway; DL-2,6-diaminopimelate from LL-2,6-diaminopimelate: step 1/1. Its activity is regulated as follows. Inhibited by LL-aziridino (LL-AziDAP), DL-aziridino (DL-AziDAP). Also inhibited by (2S,3R,6S)-2,6-diamino-3-fluoropimelate (L,L-3-fluoro-DAP) and (2R,3S,6S)-2,6-diamino-3-fluoropimelate (D,L-3-fluoro-DAP). Functionally, catalyzes the stereoinversion of LL-2,6-diaminopimelate (L,L-DAP) to meso-diaminopimelate (meso-DAP), a precursor of L-lysine and an essential component of the bacterial peptidoglycan. Only accepts DAP isomers with the L configuration. The polypeptide is Diaminopimelate epimerase (Haemophilus influenzae (strain ATCC 51907 / DSM 11121 / KW20 / Rd)).